We begin with the raw amino-acid sequence, 221 residues long: MPSSQAHSAVDTPIENHFPGSLFMVVAPSGAGKSTLVNALLAQDPSIRLSVSATTRKPRPGEQHGREYNFMTVDEFKACRDRGEFLEWAEVHGNYYATSRVWIEEQMRAGTDVLLEIDWQGAQQVHRRFANAVEIFILPPSLTALEDRLKKRGQDEPNVIVRRLLAAGSEMAHAPEADYVIINEVFEAALAELRTVVQAARLRYMAQKARHAELFVELGIH.

The Guanylate kinase-like domain maps to 20-198; sequence GSLFMVVAPS…ALAELRTVVQ (179 aa). ATP is bound at residue 27 to 34; the sequence is APSGAGKS.

Belongs to the guanylate kinase family.

It localises to the cytoplasm. It catalyses the reaction GMP + ATP = GDP + ADP. Essential for recycling GMP and indirectly, cGMP. The polypeptide is Guanylate kinase (Ralstonia nicotianae (strain ATCC BAA-1114 / GMI1000) (Ralstonia solanacearum)).